Reading from the N-terminus, the 520-residue chain is Glutamyl-tRNA(Gln) amidotransferase subunit A (520 aa).

Active-site charge relay system residues include Lys-80 and Ser-155. Residue Ser-179 is the Acyl-ester intermediate of the active site.

It belongs to the amidase family. GatA subfamily. In terms of assembly, heterotrimer of A, B and C subunits.

The catalysed reaction is L-glutamyl-tRNA(Gln) + L-glutamine + ATP + H2O = L-glutaminyl-tRNA(Gln) + L-glutamate + ADP + phosphate + H(+). Its function is as follows. Allows the formation of correctly charged Gln-tRNA(Gln) through the transamidation of misacylated Glu-tRNA(Gln) in organisms which lack glutaminyl-tRNA synthetase. The reaction takes place in the presence of glutamine and ATP through an activated gamma-phospho-Glu-tRNA(Gln). The protein is Glutamyl-tRNA(Gln) amidotransferase subunit A of Renibacterium salmoninarum (strain ATCC 33209 / DSM 20767 / JCM 11484 / NBRC 15589 / NCIMB 2235).